Reading from the N-terminus, the 287-residue chain is Pantothenate synthetase (287 aa).

30-37 is an ATP binding site; it reads MGYLHEGH. His37 acts as the Proton donor in catalysis. Gln61 contributes to the (R)-pantoate binding site. Gln61 lines the beta-alanine pocket. ATP is bound at residue 150–153; it reads GMKD. Gln156 serves as a coordination point for (R)-pantoate. ATP is bound by residues Val179 and 187-190; that span reads LSSR.

Belongs to the pantothenate synthetase family. As to quaternary structure, homodimer.

Its subcellular location is the cytoplasm. The enzyme catalyses (R)-pantoate + beta-alanine + ATP = (R)-pantothenate + AMP + diphosphate + H(+). The protein operates within cofactor biosynthesis; (R)-pantothenate biosynthesis; (R)-pantothenate from (R)-pantoate and beta-alanine: step 1/1. Its function is as follows. Catalyzes the condensation of pantoate with beta-alanine in an ATP-dependent reaction via a pantoyl-adenylate intermediate. This Coprothermobacter proteolyticus (strain ATCC 35245 / DSM 5265 / OCM 4 / BT) protein is Pantothenate synthetase.